Here is a 548-residue protein sequence, read N- to C-terminus: Non-structural protein NS1 (548 aa).

It belongs to the orbivirus non-structural protein NS1 family.

The chain is Non-structural protein NS1 (Segment-5) from Camelus dromedarius (Dromedary).